Consider the following 292-residue polypeptide: ATP synthase gamma chain (292 aa).

The protein belongs to the ATPase gamma chain family. In terms of assembly, F-type ATPases have 2 components, CF(1) - the catalytic core - and CF(0) - the membrane proton channel. CF(1) has five subunits: alpha(3), beta(3), gamma(1), delta(1), epsilon(1). CF(0) has three main subunits: a, b and c.

It localises to the cell membrane. In terms of biological role, produces ATP from ADP in the presence of a proton gradient across the membrane. The gamma chain is believed to be important in regulating ATPase activity and the flow of protons through the CF(0) complex. This chain is ATP synthase gamma chain, found in Prosthecochloris aestuarii (strain DSM 271 / SK 413).